The primary structure comprises 337 residues: Nucleoid-associated protein Avin_11450 (337 aa).

The protein belongs to the YejK family.

The protein resides in the cytoplasm. The protein localises to the nucleoid. This is Nucleoid-associated protein Avin_11450 from Azotobacter vinelandii (strain DJ / ATCC BAA-1303).